The following is a 2126-amino-acid chain: Phthioceranic/hydroxyphthioceranic acid synthase (2126 aa).

Residues 24–447 form the Ketosynthase family 3 (KS3) domain; that stretch reads VTPVAVIGMA…GTNVHAVVEQ (424 aa). Cys196 functions as the Acyl-thioester intermediate; for beta-ketoacyl synthase activity in the catalytic mechanism. Catalysis depends on for beta-ketoacyl synthase activity residues His331 and His367. Residues 449–549 are linker domain (LD); it reads PQTEAQPHAA…VYQPAVGQDD (101 aa). The segment at 550–849 is acyltransferase (AT); that stretch reads RGPVWLFSGQ…VAALAGMRRE (300 aa). Ser641 acts as the Acyl-ester intermediate; for acyltransferase activity in catalysis. The dehydratase (DH) stretch occupies residues 909 to 1191; it reads STVAVHPLLG…LAVCGLRIGT (283 aa). Residues 914-1032 form an N-terminal hotdog fold region; the sequence is HPLLGAHVRL…RRASAVLQQV (119 aa). Residues 914–1198 form the PKS/mFAS DH domain; the sequence is HPLLGAHVRL…IGTGVSERDK (285 aa). The active-site Proton acceptor; for dehydratase activity is the His947. Positions 1051–1198 are C-terminal hotdog fold; that stretch reads PCRVDGEDLR…IGTGVSERDK (148 aa). Catalysis depends on Asp1115, which acts as the Proton donor; for dehydratase activity. A pseudo beta-ketoacyl reductase (PsiKR) region spans residues 1227–1398; that stretch reads KWLLISDCAA…SEEDETAWRD (172 aa). Residues 1426 to 1750 form an enoylreductase (ER) region; the sequence is SGMRLQIRTP…EHTGKLVLHI (325 aa). Residues 1772-2019 are beta-ketoacyl reductase (KR); the sequence is GSYIITGGLG…AERSRFFEVF (248 aa). NADP(+) contacts are provided by residues 1780–1783, 1803–1806, 1831–1832, and 1904–1905; these read LGGL, SRTQ, DI, and FS. The region spanning 2040 to 2126 is the Carrier domain; that stretch reads DEWPARLRQL…DAPAAALSSQ (87 aa). Ser2075 carries the O-(pantetheine 4'-phosphoryl)serine modification.

It depends on pantetheine 4'-phosphate as a cofactor.

It carries out the reaction hexadecanoyl-[(hydroxy)phthioceranic acid synthase] + 7 (S)-methylmalonyl-CoA + 14 NADPH + 21 H(+) = C37-phthioceranyl-[(hydroxy)phthioceranic acid synthase] + 7 CO2 + 14 NADP(+) + 7 CoA + 7 H2O. It catalyses the reaction hexadecanoyl-[(hydroxy)phthioceranic acid synthase] + 8 (S)-methylmalonyl-CoA + 16 NADPH + 24 H(+) = C40-phthioceranyl-[(hydroxy)phthioceranic acid synthase] + 8 CO2 + 16 NADP(+) + 8 CoA + 8 H2O. Its pathway is lipid metabolism; fatty acid biosynthesis. It participates in glycolipid metabolism; sulfolipid-1 biosynthesis. Its function is as follows. Involved in sulfolipid-1 biosynthesis. Catalyzes the synthesis of the hepta- and octamethyl phthioceranic and hydroxyphthioceranic acids, the methyl-branched acyl constituents of sulfolipids. This Mycobacterium bovis (strain ATCC BAA-935 / AF2122/97) protein is Phthioceranic/hydroxyphthioceranic acid synthase (pks2).